Here is a 346-residue protein sequence, read N- to C-terminus: DNA ligase (346 aa).

Residues 32–35 (DCKY), Arg-39, 55–57 (RVS), Glu-93, Glu-142, and Arg-149 each bind ATP. Lys-34 serves as the catalytic N6-AMP-lysine intermediate. Glu-223 contributes to the a divalent metal cation binding site. Lys-238 and Lys-244 together coordinate ATP.

Belongs to the ATP-dependent DNA ligase family. It depends on a divalent metal cation as a cofactor.

The catalysed reaction is ATP + (deoxyribonucleotide)n-3'-hydroxyl + 5'-phospho-(deoxyribonucleotide)m = (deoxyribonucleotide)n+m + AMP + diphosphate.. Functionally, DNA ligase, which is expressed in the early stage of lytic development, has been implicated in T7 DNA synthesis and genetic recombination. It may also play a role in T7 DNA repair. The chain is DNA ligase (1.3) from Enterobacteria phage T3 (Bacteriophage T3).